Here is a 492-residue protein sequence, read N- to C-terminus: V-type proton ATPase subunit B 1 (492 aa).

This sequence belongs to the ATPase alpha/beta chains family. In terms of assembly, V-ATPase is a heteromultimeric enzyme composed of a peripheral catalytic V1 complex (main components: subunits A, B, C, D, E, and F) attached to an integral membrane V0 proton pore complex (main component: the proteolipid protein).

In terms of biological role, non-catalytic subunit of the peripheral V1 complex of vacuolar ATPase. V-ATPase is responsible for acidifying a variety of intracellular compartments in eukaryotic cells. This is V-type proton ATPase subunit B 1 from Acetabularia acetabulum (Mermaid's wine glass).